The following is a 178-amino-acid chain: Putative pre-16S rRNA nuclease (178 aa).

The span at 1 to 18 shows a compositional bias: basic and acidic residues; sequence MDHAEQGPDRPGVDDPGR. The tract at residues 1–21 is disordered; it reads MDHAEQGPDRPGVDDPGRGRR.

Belongs to the YqgF nuclease family.

It localises to the cytoplasm. Could be a nuclease involved in processing of the 5'-end of pre-16S rRNA. This is Putative pre-16S rRNA nuclease from Rhodococcus jostii (strain RHA1).